Reading from the N-terminus, the 1074-residue chain is Transmembrane protein 132E (1074 aa).

The N-terminal stretch at 1–23 (MAPGMSGRRGAALLCLSVLLAHA) is a signal peptide. Topologically, residues 26-894 (RSHPASPSPP…LTDLEIGMYA (869 aa)) are extracellular. N-linked (GlcNAc...) asparagine glycosylation is found at N70 and N91. 2 disordered regions span residues 205–224 (PAAPPSARRKSPDGLEPEAA) and 243–266 (GGCGSARRGPGPGPGAAARAESPT). Residues 247 to 262 (SARRGPGPGPGAAARA) are compositionally biased toward low complexity. 2 N-linked (GlcNAc...) asparagine glycosylation sites follow: N320 and N401. Disordered regions lie at residues 564–587 (RRSARESEDEEEEEEERRQSANRG) and 816–867 (GRDE…PVPP). A compositionally biased stretch (low complexity) spans 843–854 (GAGPPGTAIPAG). A helical membrane pass occupies residues 895-915 (LLGVFCLAILVFLINCIVFVL). Over 916–1074 (RYRHKRIPPE…NYMRRIKDIA (159 aa)) the chain is Cytoplasmic. Residues 962 to 1064 (VPACCHGDHH…TRPTPPPDLH (103 aa)) are disordered. Low complexity-rich tracts occupy residues 973–985 (SGSSQTSVQSQVH) and 1016–1026 (FTTFTTLPTEE). Acidic residues predominate over residues 1035–1044 (GEEEDEEEDL).

Belongs to the TMEM132 family. As to expression, widely expressed, with highest levels in the cochlea. In the cochlea, detected in spiral ganglion, the organ of Corti and stria vascularis. In the organ of Corti, prominently expressed in the outer and inner hair cells, especially at the apical and basal region of the outer hair cell body (at protein level).

The protein localises to the membrane. Its function is as follows. Required for normal inner ear hair cell function and hearing. The protein is Transmembrane protein 132E (Tmem132e) of Mus musculus (Mouse).